Consider the following 207-residue polypeptide: Large ribosomal subunit protein uL4 (207 aa).

Positions 48–89 (SHKVKNRSEVRGGGRKPWRQKGTGRARQGSIRSPQWRGGGVV) are disordered. Over residues 60–71 (GGRKPWRQKGTG) the composition is skewed to basic residues.

It belongs to the universal ribosomal protein uL4 family. In terms of assembly, part of the 50S ribosomal subunit.

In terms of biological role, one of the primary rRNA binding proteins, this protein initially binds near the 5'-end of the 23S rRNA. It is important during the early stages of 50S assembly. It makes multiple contacts with different domains of the 23S rRNA in the assembled 50S subunit and ribosome. Forms part of the polypeptide exit tunnel. The chain is Large ribosomal subunit protein uL4 from Bacillus velezensis (strain DSM 23117 / BGSC 10A6 / LMG 26770 / FZB42) (Bacillus amyloliquefaciens subsp. plantarum).